A 1302-amino-acid polypeptide reads, in one-letter code: RNA-directed RNA polymerase (1302 aa).

A RdRp catalytic domain is found at 562-823 (VIVGDLEATG…QTHAKQGCYV (262 aa)).

Belongs to the reoviridae RNA-directed RNA polymerase family.

It catalyses the reaction RNA(n) + a ribonucleoside 5'-triphosphate = RNA(n+1) + diphosphate. The chain is RNA-directed RNA polymerase (Segment-1) from Antilocapra americana (Pronghorn).